A 241-amino-acid chain; its full sequence is Tetraspanin-1 (241 aa).

At 1-11 (MGCFNFIKVMM) the chain is on the cytoplasmic side. A helical membrane pass occupies residues 12 to 32 (ILFNMLIFLCGAALLAVGIWV). The Extracellular segment spans residues 33–52 (SVDGPSFVKIFGPMSSSAMQ). The helical transmembrane segment at 53 to 73 (FVNVGYFLIAAGAVLFALGFL) threads the bilayer. At 74-88 (GCYGAQTESKCALMT) the chain is on the cytoplasmic side. Residues 89-109 (FFFILLLIFIAEVAAAVVALV) traverse the membrane as a helical segment. Topologically, residues 110-211 (YTTLAENFLT…KQLLYDIRTN (102 aa)) are extracellular. Asn141, Asn154, Asn167, Asn180, Asn189, and Asn194 each carry an N-linked (GlcNAc...) asparagine glycan. The helical transmembrane segment at 212–232 (AVTVGGVAAGIGGLELAAMIV) threads the bilayer. Residues 233–241 (SMYLYCNLE) are Cytoplasmic-facing.

Belongs to the tetraspanin (TM4SF) family. Interacts with SLC19A2. Interacts with NTRK1/TRKA.

The protein localises to the lysosome membrane. Its function is as follows. Structural component of specialized membrane microdomains known as tetraspanin-enriched microdomains (TERMs), which act as platforms for receptor clustering and signaling. Participates thereby in diverse biological functions such as cell signal transduction, adhesion, migration and protein trafficking. Regulates neuronal differentiation in response to NGF by facilitating NGF-mediated activation of NTRK1/TRKA receptor tyrosine kinase and subsequent downstream signaling pathways. Plays a role in the inhibition of TNFalpha-induced apoptosis. Mechanistically, inhibits the NF-kappa-B signaling pathway by blocking phosphorylation of CHUK. Also promotes the stability of the thiamine transporter 1/SLC19A2 in intestinal epithelial cells leading to an increase of thiamine uptake process. In Bos taurus (Bovine), this protein is Tetraspanin-1 (TSPAN1).